A 287-amino-acid chain; its full sequence is MRIAVFMGGTSSEKEISLKSGEAVLESLQKQGYDAYGVILDERNQVSAFVDNDYDLAYLVLHGGNGENGKIQAVLDILGKKYTGSGVLASAITMDKDKTKQIAQSVGIKTPKSYRPVEEIERFPVIIKPVDEGSSKGLFLCNNKEEAEEAVKKLAKPIIEDYIIGEELTVGVLNGEALGVLKIIPQADVLYDYDSKYAKGGSVHEFPAKIENKSYKEAMKIAEKIHSEFGMKGISRSDFILSEGELYFLEVNSSPGMTKTSLIPDLATLKGYSFDDVVRITVETFLE.

The region spanning 98 to 283 (KTKQIAQSVG…FDDVVRITVE (186 aa)) is the ATP-grasp domain. 124 to 169 (PVIIKPVDEGSSKGLFLCNNKEEAEEAVKKLAKPIIEDYIIGEELT) lines the ATP pocket. 3 residues coordinate Mg(2+): D238, E250, and N252.

This sequence belongs to the D-alanine--D-alanine ligase family. Requires Mg(2+) as cofactor. The cofactor is Mn(2+).

It is found in the cytoplasm. The catalysed reaction is 2 D-alanine + ATP = D-alanyl-D-alanine + ADP + phosphate + H(+). Its pathway is cell wall biogenesis; peptidoglycan biosynthesis. In terms of biological role, cell wall formation. The sequence is that of D-alanine--D-alanine ligase from Fusobacterium nucleatum subsp. nucleatum (strain ATCC 25586 / DSM 15643 / BCRC 10681 / CIP 101130 / JCM 8532 / KCTC 2640 / LMG 13131 / VPI 4355).